Reading from the N-terminus, the 378-residue chain is C-X-C chemokine receptor type 3-2 (378 aa).

At 1-47 (MDNSTTAAEVSAPTDYDYNSTSYDDDNPYAAPCSLTETWNFLGRFAP) the chain is on the extracellular side. Asparagine 3 and asparagine 19 each carry an N-linked (GlcNAc...) asparagine glycan. The chain crosses the membrane as a helical span at residues 48 to 68 (VAYILVFILALVGNILVLCVI). The Cytoplasmic segment spans residues 69-86 (RRYRQSRHSPCSFSLTDT). The chain crosses the membrane as a helical span at residues 87–107 (FLLHLAVSDLLLAATLPFFAV). At 108 to 121 (EWISEWVFGKVMCK) the chain is on the extracellular side. A disulfide bridge connects residues cysteine 120 and cysteine 199. A helical membrane pass occupies residues 122 to 142 (ITGALFSLNVYCGVLFLACIS). Residues 143-164 (FDRYLAIVHAINISWRRKTCHA) are Cytoplasmic-facing. A helical transmembrane segment spans residues 165 to 185 (QLACAFIWVICLGLSMVDMHF). Over 186-212 (RDLVEIPGMNRMVCQIVYSEQYSKQWQ) the chain is Extracellular. A helical membrane pass occupies residues 213-233 (IGMQLVSMVLGFILPLLVMLY). Over 234–253 (CYLHIFKALCHATRRQKRRS) the chain is Cytoplasmic. Residues 254 to 274 (LRLIISLVIVFVISWAPYNAL) traverse the membrane as a helical segment. At 275-304 (RMTDSLQMLGVIVKSCALNNVLDVGILVTE) the chain is on the extracellular side. Residues 305–325 (SLGLAHCALNPLLYGLVGVKF) traverse the membrane as a helical segment. The Cytoplasmic portion of the chain corresponds to 326-378 (RRELAQMCKAALGPQGCLGLVGWANGRGSSTRRPTGSFSSVETENTSYFSVMA).

This sequence belongs to the G-protein coupled receptor 1 family.

Its subcellular location is the cell membrane. Receptor for the C-X-C chemokines cxcl11.1 and cxcl11.6. Promotes macrophage chemotaxis to sites of bacterial infection. This chain is C-X-C chemokine receptor type 3-2, found in Danio rerio (Zebrafish).